The chain runs to 334 residues: Glyceraldehyde-3-phosphate dehydrogenase (334 aa).

Residues 12–13, Asp34, and Arg79 contribute to the NAD(+) site; that span reads RI. Residues 150-152, Thr181, 210-211, and Arg233 contribute to the D-glyceraldehyde 3-phosphate site; these read SCT and TG. Cys151 serves as the catalytic Nucleophile. Asn315 is an NAD(+) binding site.

Belongs to the glyceraldehyde-3-phosphate dehydrogenase family. As to quaternary structure, homotetramer.

It is found in the cytoplasm. It carries out the reaction D-glyceraldehyde 3-phosphate + phosphate + NAD(+) = (2R)-3-phospho-glyceroyl phosphate + NADH + H(+). The protein operates within carbohydrate degradation; glycolysis; pyruvate from D-glyceraldehyde 3-phosphate: step 1/5. This chain is Glyceraldehyde-3-phosphate dehydrogenase (GPD), found in Wickerhamomyces ciferrii (strain ATCC 14091 / BCRC 22168 / CBS 111 / JCM 3599 / NBRC 0793 / NRRL Y-1031 F-60-10) (Yeast).